We begin with the raw amino-acid sequence, 591 residues long: CTP synthase (591 aa).

Residues 1–281 (MPQSRTHSRT…DAYVVRQLGL (281 aa)) form an amidoligase domain region. Residue S23 coordinates CTP. Position 23 (S23) interacts with UTP. Residues 24–29 (SLGKGL) and D81 each bind ATP. Residues D81 and E155 each coordinate Mg(2+). Residues 162–164 (DIE), 202–207 (KTKPTQ), and K238 contribute to the CTP site. UTP contacts are provided by residues 202-207 (KTKPTQ) and K238. The Glutamine amidotransferase type-1 domain occupies 306 to 554 (RIALVGKYVD…VDAALKHKLE (249 aa)). L-glutamine is bound at residue G369. The Nucleophile; for glutamine hydrolysis role is filled by C396. L-glutamine contacts are provided by residues 397–400 (LGLQ), E419, and R480. Residues H527 and E529 contribute to the active site. Residues 568–591 (AVATDDELADSADRDEVASVDSAG) form a disordered region.

The protein belongs to the CTP synthase family. In terms of assembly, homotetramer.

It catalyses the reaction UTP + L-glutamine + ATP + H2O = CTP + L-glutamate + ADP + phosphate + 2 H(+). The enzyme catalyses L-glutamine + H2O = L-glutamate + NH4(+). The catalysed reaction is UTP + NH4(+) + ATP = CTP + ADP + phosphate + 2 H(+). The protein operates within pyrimidine metabolism; CTP biosynthesis via de novo pathway; CTP from UDP: step 2/2. With respect to regulation, allosterically activated by GTP, when glutamine is the substrate; GTP has no effect on the reaction when ammonia is the substrate. The allosteric effector GTP functions by stabilizing the protein conformation that binds the tetrahedral intermediate(s) formed during glutamine hydrolysis. Inhibited by the product CTP, via allosteric rather than competitive inhibition. Catalyzes the ATP-dependent amination of UTP to CTP with either L-glutamine or ammonia as the source of nitrogen. Regulates intracellular CTP levels through interactions with the four ribonucleotide triphosphates. The chain is CTP synthase from Rhodococcus jostii (strain RHA1).